The following is a 142-amino-acid chain: Transcriptional regulator MraZ (142 aa).

SpoVT-AbrB domains lie at 5–47 (EYQH…TINE) and 76–119 (ACIV…SREK).

It belongs to the MraZ family. In terms of assembly, forms oligomers.

It is found in the cytoplasm. Its subcellular location is the nucleoid. The sequence is that of Transcriptional regulator MraZ from Clostridium botulinum (strain Alaska E43 / Type E3).